The following is a 286-amino-acid chain: Putative inorganic pyrophosphatase C3A12.02 (286 aa).

Arginine 85 contacts diphosphate. 3 residues coordinate Mg(2+): aspartate 122, aspartate 127, and aspartate 159.

Belongs to the PPase family. Requires Mg(2+) as cofactor.

It localises to the cytoplasm. It catalyses the reaction diphosphate + H2O = 2 phosphate + H(+). This Schizosaccharomyces pombe (strain 972 / ATCC 24843) (Fission yeast) protein is Putative inorganic pyrophosphatase C3A12.02.